Here is a 472-residue protein sequence, read N- to C-terminus: FAD-dependent monooxygenase dpmaE (472 aa).

Positions Met1 to Leu24 are cleaved as a signal peptide. FAD contacts are provided by Glu35, Gly49, and Arg108. Asn128 and Asn179 each carry an N-linked (GlcNAc...) asparagine glycan. The FAD site is built by Asp305 and Ala318. An N-linked (GlcNAc...) asparagine glycan is attached at Asn369. The chain crosses the membrane as a helical span at residues Leu440–Ile460.

The protein belongs to the paxM FAD-dependent monooxygenase family. It depends on FAD as a cofactor.

Its subcellular location is the membrane. Its pathway is secondary metabolite biosynthesis; terpenoid biosynthesis. Functionally, FAD-dependent monooxygenase; part of the gene cluster that mediates the biosynthesis of the diterpenoid pyrones subglutinols A and B. The first step of the pathway is the synthesis of the alpha-pyrone moiety by the polyketide synthase dpmaA via condensation of one acetyl-CoA starter unit with 3 malonyl-CoA units and 2 methylations. The alpha-pyrone is then combined with geranylgeranyl pyrophosphate (GGPP) formed by the GGPP synthase dpmaD through the action of the prenyltransferase dpmaC to yield a linear alpha-pyrone diterpenoid. Subsequent steps in the diterpenoid pyrone biosynthetic pathway involve the decalin core formation, which is initiated by the epoxidation of the C10-C11 olefin by the FAD-dependent oxidoreductase dpmaE, and is followed by a cyclization cascade catalyzed by the terpene cyclase dpmaB. The dehydrogenase dpmaF is then involved in tetrahydrofuran (THF) ring formation at the C5 unit to complete the formation of subglutinols A and B. The chain is FAD-dependent monooxygenase dpmaE from Metarhizium anisopliae (Entomophthora anisopliae).